Consider the following 230-residue polypeptide: Probable endonuclease C19F8.04c (230 aa).

The chain crosses the membrane as a helical span at residues 10–27; it reads AIIGTGLITTSIGGFFFL. One can recognise a TNase-like domain in the interval 55–216; that stretch reads KTMFGYVTRV…KKKKLSLWSQ (162 aa). Residue Arg-104 is part of the active site. A Ca(2+)-binding site is contributed by Asp-109. Active-site residues include Glu-112 and Arg-152.

It belongs to the LCL3 family.

Its subcellular location is the mitochondrion. It is found in the membrane. The protein is Probable endonuclease C19F8.04c of Schizosaccharomyces pombe (strain 972 / ATCC 24843) (Fission yeast).